We begin with the raw amino-acid sequence, 164 residues long: UPF0304 protein KPK_1463 (164 aa).

This sequence belongs to the UPF0304 family.

The chain is UPF0304 protein KPK_1463 from Klebsiella pneumoniae (strain 342).